A 401-amino-acid polypeptide reads, in one-letter code: Formate-dependent phosphoribosylglycinamide formyltransferase (401 aa).

Residues 22–23 and Glu82 each bind N(1)-(5-phospho-beta-D-ribosyl)glycinamide; that span reads EL. ATP-binding positions include Arg115, Lys157, 162-167, 197-200, and Glu205; these read SSGKGQ and EGFV. Positions 120-315 constitute an ATP-grasp domain; it reads RLAAETLALP…EFELHARAIL (196 aa). Positions 274 and 286 each coordinate Mg(2+). Residues Asp293, Lys362, and 369–370 contribute to the N(1)-(5-phospho-beta-D-ribosyl)glycinamide site; that span reads RR.

This sequence belongs to the PurK/PurT family. In terms of assembly, homodimer.

The enzyme catalyses N(1)-(5-phospho-beta-D-ribosyl)glycinamide + formate + ATP = N(2)-formyl-N(1)-(5-phospho-beta-D-ribosyl)glycinamide + ADP + phosphate + H(+). The protein operates within purine metabolism; IMP biosynthesis via de novo pathway; N(2)-formyl-N(1)-(5-phospho-D-ribosyl)glycinamide from N(1)-(5-phospho-D-ribosyl)glycinamide (formate route): step 1/1. Its function is as follows. Involved in the de novo purine biosynthesis. Catalyzes the transfer of formate to 5-phospho-ribosyl-glycinamide (GAR), producing 5-phospho-ribosyl-N-formylglycinamide (FGAR). Formate is provided by PurU via hydrolysis of 10-formyl-tetrahydrofolate. This chain is Formate-dependent phosphoribosylglycinamide formyltransferase, found in Polaromonas naphthalenivorans (strain CJ2).